Consider the following 519-residue polypeptide: Chromobox protein homolog 2 (519 aa).

The 59-residue stretch at 12 to 70 (FAAECILSKRLRKGKLEYLVKWRGWSSKHNSWEPEENILDPRLLLAFQKKEHEKEVQNR) folds into the Chromo domain. Residues 60 to 69 (KKEHEKEVQN) are compositionally biased toward basic and acidic residues. The disordered stretch occupies residues 60-180 (KKEHEKEVQN…PPEQKAARRP (121 aa)). The segment covering 70–84 (RKRGKRPRGRPRKHT) has biased composition (basic residues). Positions 75–87 (RPRGRPRKHTVTS) form a DNA-binding region, a.T hook. Over residues 103 to 119 (KSKSSSSSSSSTSSSSS) the composition is skewed to low complexity. Positions 129 to 141 (LDSKRGPRGRETH) are enriched in basic and acidic residues. Residues Lys-147 and Lys-154 each participate in a glycyl lysine isopeptide (Lys-Gly) (interchain with G-Cter in SUMO2) cross-link. The Nuclear localization signal motif lies at 164 to 169 (KRGRKP). Arg-248 bears the Asymmetric dimethylarginine; alternate mark. Omega-N-methylarginine; alternate is present on Arg-248. Disordered stretches follow at residues 295–336 (QKGG…LAPT) and 367–464 (AIPA…TSLP). Ser-303 is subject to Phosphoserine. 2 stretches are compositionally biased toward polar residues: residues 321–336 (QRGN…LAPT) and 384–395 (TGANMTNAPTDN). Over residues 453–464 (SSDSDPDSTSLP) the composition is skewed to low complexity.

In terms of assembly, component of a PRC1-like complex. The composition of the PRC1 complex may differ between the PRC1 complex in pluripotent embryonic stem cells containing RNF2, CBX7 and PCGF2, and the PRC1 complex in differentiating cells containing RNF2, CBX2, CBX4 and BMI1. Interacts with RING1/RNF2. Interacts (via chromodomain) with histone H3K9Me3 and H3K27me3. May interact with H3C15 and H3C1. Expressed in embryoid bodies.

Its subcellular location is the nucleus speckle. It localises to the chromosome. Component of a Polycomb group (PcG) multiprotein PRC1-like complex, a complex class required to maintain the transcriptionally repressive state of many genes, including Hox genes, throughout development. PcG PRC1 complex acts via chromatin remodeling and modification of histones; it mediates monoubiquitination of histone H2A 'Lys-119', rendering chromatin heritably changed in its expressibility. Binds to histone H3 trimethylated at 'Lys-9' (H3K9me3) or at 'Lys-27' (H3K27me3). Plays a role in the lineage differentiation of the germ layers in embryonic development. Involved in sexual development, acting as activator of NR5A1 expression. This is Chromobox protein homolog 2 (Cbx2) from Mus musculus (Mouse).